Consider the following 81-residue polypeptide: Cytochrome b559 subunit alpha (81 aa).

The chain crosses the membrane as a helical span at residues 21-35 (VIHSITIPALFIAGW). Histidine 23 is a heme binding site.

It belongs to the PsbE/PsbF family. As to quaternary structure, heterodimer of an alpha subunit and a beta subunit. PSII is composed of 1 copy each of membrane proteins PsbA, PsbB, PsbC, PsbD, PsbE, PsbF, PsbH, PsbI, PsbJ, PsbK, PsbL, PsbM, PsbT, PsbX, PsbY, PsbZ, Psb30/Ycf12, at least 3 peripheral proteins of the oxygen-evolving complex and a large number of cofactors. It forms dimeric complexes. Heme b is required as a cofactor.

It localises to the plastid. Its subcellular location is the chloroplast thylakoid membrane. In terms of biological role, this b-type cytochrome is tightly associated with the reaction center of photosystem II (PSII). PSII is a light-driven water:plastoquinone oxidoreductase that uses light energy to abstract electrons from H(2)O, generating O(2) and a proton gradient subsequently used for ATP formation. It consists of a core antenna complex that captures photons, and an electron transfer chain that converts photonic excitation into a charge separation. The chain is Cytochrome b559 subunit alpha from Tetradesmus obliquus (Green alga).